The primary structure comprises 97 residues: Large ribosomal subunit protein uL23 (97 aa).

This sequence belongs to the universal ribosomal protein uL23 family. As to quaternary structure, part of the 50S ribosomal subunit. Contacts protein L29, and trigger factor when it is bound to the ribosome.

One of the early assembly proteins it binds 23S rRNA. One of the proteins that surrounds the polypeptide exit tunnel on the outside of the ribosome. Forms the main docking site for trigger factor binding to the ribosome. This chain is Large ribosomal subunit protein uL23, found in Lactococcus lactis subsp. cremoris (strain SK11).